An 840-amino-acid polypeptide reads, in one-letter code: Probable alpha-glucuronidase A (840 aa).

Residues 1 to 19 form the signal peptide; that stretch reads MWSGIPVFALLSSIGIAAA. N-linked (GlcNAc...) asparagine glycosylation is found at N50, N149, N222, N262, N279, N310, N465, N527, N576, N610, N682, N723, and N732.

It belongs to the glycosyl hydrolase 67 family.

The protein resides in the secreted. It carries out the reaction an alpha-D-glucuronoside + H2O = D-glucuronate + an alcohol. Functionally, alpha-glucuronidase involved in the hydrolysis of xylan, a major structural heterogeneous polysaccharide found in plant biomass representing the second most abundant polysaccharide in the biosphere, after cellulose. Releases 4-O-methylglucuronic acid from xylan. In Neosartorya fischeri (strain ATCC 1020 / DSM 3700 / CBS 544.65 / FGSC A1164 / JCM 1740 / NRRL 181 / WB 181) (Aspergillus fischerianus), this protein is Probable alpha-glucuronidase A (aguA).